Consider the following 1113-residue polypeptide: Antigenic protein P1 (1113 aa).

A helical membrane pass occupies residues 7 to 27 (IIAVVAIASAIVTGVVVIVVV). Asn-121, Asn-207, Asn-225, Asn-233, Asn-274, Asn-533, Asn-576, Asn-622, Asn-675, Asn-679, Asn-730, Asn-753, Asn-880, Asn-899, Asn-907, Asn-972, and Asn-995 each carry an N-linked (GlcNAc...) asparagine glycan. Residues 159-473 (VFGQRAVAWA…SYVNMAHAFG (315 aa)) form the Peptidase M60 domain. The PA14 domain occupies 648–800 (LDPHQVEYEV…TEESSVDVSK (153 aa)).

The protein resides in the membrane. The sequence is that of Antigenic protein P1 from Entamoeba histolytica (strain ATCC 30459 / HM-1:IMSS / ABRM).